A 48-amino-acid chain; its full sequence is Sperm protamine P1 (48 aa).

This sequence belongs to the protamine P1 family. Testis.

The protein localises to the nucleus. It is found in the chromosome. In terms of biological role, protamines substitute for histones in the chromatin of sperm during the haploid phase of spermatogenesis. They compact sperm DNA into a highly condensed, stable and inactive complex. The polypeptide is Sperm protamine P1 (PRM1) (Eptesicus fuscus (Big brown bat)).